A 347-amino-acid chain; its full sequence is Quinolinate synthase (347 aa).

Iminosuccinate contacts are provided by His-47 and Ser-68. Residue Cys-113 participates in [4Fe-4S] cluster binding. Iminosuccinate-binding positions include 139–141 (YAN) and Ser-156. Residue Cys-200 participates in [4Fe-4S] cluster binding. Iminosuccinate is bound by residues 226–228 (HPE) and Thr-243. Cys-297 serves as a coordination point for [4Fe-4S] cluster.

Belongs to the quinolinate synthase family. Type 1 subfamily. It depends on [4Fe-4S] cluster as a cofactor.

It localises to the cytoplasm. It carries out the reaction iminosuccinate + dihydroxyacetone phosphate = quinolinate + phosphate + 2 H2O + H(+). The protein operates within cofactor biosynthesis; NAD(+) biosynthesis; quinolinate from iminoaspartate: step 1/1. Its function is as follows. Catalyzes the condensation of iminoaspartate with dihydroxyacetone phosphate to form quinolinate. This is Quinolinate synthase from Salmonella agona (strain SL483).